The chain runs to 534 residues: Flavonoid-6-hydroxylase (534 aa).

Residues 3–23 traverse the membrane as a helical segment; that stretch reads FISFVYTLIAFSSLLYFYLIW. Heme is bound at residue cysteine 467.

It belongs to the cytochrome P450 family. It depends on heme as a cofactor. Expressed in leaves.

Its subcellular location is the membrane. The enzyme catalyses genkwanin + reduced [NADPH--hemoprotein reductase] + O2 = scutellarein 7-methyl ether + oxidized [NADPH--hemoprotein reductase] + H2O. It catalyses the reaction (2S)-sakuranetin + reduced [NADPH--hemoprotein reductase] + O2 = (2S)-7-methylcarthamidin + oxidized [NADPH--hemoprotein reductase] + H2O + H(+). The catalysed reaction is apigenin 4',7-dimethyl ether + reduced [NADPH--hemoprotein reductase] + O2 = ladanein + oxidized [NADPH--hemoprotein reductase] + H2O + H(+). It carries out the reaction (2S)-naringenin 4',7-dimethyl ether + reduced [NADPH--hemoprotein reductase] + O2 = (2S)-carthamidin-4',7-dimethyl ether + oxidized [NADPH--hemoprotein reductase] + H2O + H(+). It functions in the pathway flavonoid metabolism. In terms of biological role, hydroxylase involved in the biosynthesis of polymethoxylated flavonoids natural products such as nevadensin and salvigenin, aroma compounds which contribute to the flavor of sweet basil, and exhibit pharmacological activities such as anti-allergic, anti-oxidant, antibacterial, anti-proliferative, and anti-inflammatory effects. Catalyzes the 6-hydroxylation of 7-O-methylated precursors such as the conversion of genkwanin (GENK) to scutellarein-7-methyl ether (SCU7Me). Can also use, with a lower efficiency, apigenin-7,4'-dimethyl ether (AdM), naringenin-7-methyl ether (SAK) and naringenin-7,4'-dimethyl ether (NdM) as substrates. This chain is Flavonoid-6-hydroxylase, found in Ocimum basilicum (Sweet basil).